We begin with the raw amino-acid sequence, 155 residues long: NADH-ubiquinone oxidoreductase chain 6 (155 aa).

4 helical membrane-spanning segments follow: residues 24–44 (MSLLLALLTLSLCAVLWLGSF), 51–71 (YILFIVYIGGILVLFIYVCMI), 88–108 (AWGAVMLMSLTMETDTFIILG), and 118–138 (IPMTILIFLSIYLLIVFFAVV).

The protein belongs to the complex I subunit 6 family.

The protein localises to the mitochondrion membrane. The enzyme catalyses a ubiquinone + NADH + 5 H(+)(in) = a ubiquinol + NAD(+) + 4 H(+)(out). Core subunit of the mitochondrial membrane respiratory chain NADH dehydrogenase (Complex I) that is believed to belong to the minimal assembly required for catalysis. Complex I functions in the transfer of electrons from NADH to the respiratory chain. The immediate electron acceptor for the enzyme is believed to be ubiquinone. The polypeptide is NADH-ubiquinone oxidoreductase chain 6 (ND6) (Albinaria caerulea (Land snail)).